A 738-amino-acid chain; its full sequence is Phosphoribosylformylglycinamidine synthase subunit PurL (738 aa).

His53 is a catalytic residue. 2 residues coordinate ATP: Tyr56 and Lys95. Glu97 is a Mg(2+) binding site. Substrate is bound by residues 98-101 (SHNH) and Arg120. His99 functions as the Proton acceptor in the catalytic mechanism. Asp121 is a binding site for Mg(2+). Position 244 (Gln244) interacts with substrate. A Mg(2+)-binding site is contributed by Asp274. Residue 318-320 (ESQ) coordinates substrate. ATP-binding residues include Asp499 and Gly536. Asn537 lines the Mg(2+) pocket. Ser539 contributes to the substrate binding site.

Belongs to the FGAMS family. Monomer. Part of the FGAM synthase complex composed of 1 PurL, 1 PurQ and 2 PurS subunits.

The protein localises to the cytoplasm. The enzyme catalyses N(2)-formyl-N(1)-(5-phospho-beta-D-ribosyl)glycinamide + L-glutamine + ATP + H2O = 2-formamido-N(1)-(5-O-phospho-beta-D-ribosyl)acetamidine + L-glutamate + ADP + phosphate + H(+). It functions in the pathway purine metabolism; IMP biosynthesis via de novo pathway; 5-amino-1-(5-phospho-D-ribosyl)imidazole from N(2)-formyl-N(1)-(5-phospho-D-ribosyl)glycinamide: step 1/2. In terms of biological role, part of the phosphoribosylformylglycinamidine synthase complex involved in the purines biosynthetic pathway. Catalyzes the ATP-dependent conversion of formylglycinamide ribonucleotide (FGAR) and glutamine to yield formylglycinamidine ribonucleotide (FGAM) and glutamate. The FGAM synthase complex is composed of three subunits. PurQ produces an ammonia molecule by converting glutamine to glutamate. PurL transfers the ammonia molecule to FGAR to form FGAM in an ATP-dependent manner. PurS interacts with PurQ and PurL and is thought to assist in the transfer of the ammonia molecule from PurQ to PurL. The protein is Phosphoribosylformylglycinamidine synthase subunit PurL of Leuconostoc mesenteroides subsp. mesenteroides (strain ATCC 8293 / DSM 20343 / BCRC 11652 / CCM 1803 / JCM 6124 / NCDO 523 / NBRC 100496 / NCIMB 8023 / NCTC 12954 / NRRL B-1118 / 37Y).